Reading from the N-terminus, the 215-residue chain is ATP phosphoribosyltransferase (215 aa).

This sequence belongs to the ATP phosphoribosyltransferase family. Short subfamily. As to quaternary structure, heteromultimer composed of HisG and HisZ subunits.

The protein resides in the cytoplasm. The enzyme catalyses 1-(5-phospho-beta-D-ribosyl)-ATP + diphosphate = 5-phospho-alpha-D-ribose 1-diphosphate + ATP. It functions in the pathway amino-acid biosynthesis; L-histidine biosynthesis; L-histidine from 5-phospho-alpha-D-ribose 1-diphosphate: step 1/9. Its function is as follows. Catalyzes the condensation of ATP and 5-phosphoribose 1-diphosphate to form N'-(5'-phosphoribosyl)-ATP (PR-ATP). Has a crucial role in the pathway because the rate of histidine biosynthesis seems to be controlled primarily by regulation of HisG enzymatic activity. This Prochlorococcus marinus (strain MIT 9215) protein is ATP phosphoribosyltransferase.